A 120-amino-acid chain; its full sequence is Large ribosomal subunit protein uL18 (120 aa).

Belongs to the universal ribosomal protein uL18 family. As to quaternary structure, part of the 50S ribosomal subunit; part of the 5S rRNA/L5/L18/L25 subcomplex. Contacts the 5S and 23S rRNAs.

This is one of the proteins that bind and probably mediate the attachment of the 5S RNA into the large ribosomal subunit, where it forms part of the central protuberance. The chain is Large ribosomal subunit protein uL18 from Methylobacterium radiotolerans (strain ATCC 27329 / DSM 1819 / JCM 2831 / NBRC 15690 / NCIMB 10815 / 0-1).